The following is a 1172-amino-acid chain: MLEGCILAVSSQSKSAKAITNNSVPGAPNRISFAKLREPLEVPGLLDVQTESFDWLIGADSWRQRATARGDVNPTGGLEEVLTELSPIEDFSGSMSLSFSDPRFDEVKAPVDECKDKDMTYAAPLFVTAEFINNNTGEIKSQTVFMGDFPMMTEKGTFIINGTERVVVSQLVRSPGVYFDESIDKSTEKTLHSVKVIPGRGAWLEFDVDKRDTVGVRIDRKRRQPVTVLLKALGWTNEQITERFGFSEIMMSTLEKDNTAGTDEALLDIYRKLRPGEPPTKESAQTLLENLFFKEKRYDLARVGRYKVNKKLGLNTDKPITSSTLTEEDVVATIEYLVRLHQGDTVMTVPGGVEVPVEVDDIDHFGNRRLRTVGELIQNQIRVGLSRMERVVRERMTTQDVEAITPQTLINIRPVVAAIKEFFGTSQLSQFMDQNNPLSGLTHKRRLSALGPGGLSRERAGLEVRDVHSSHYGRMCPIETPEGPNIGLIGSLSVYARVNPFGFIETPYRKVENGVVTDQIDYLTADEEDRHVVAQANSPLDDEGHFTEDRVLVRRKGGEVEFVSATEVDYMDVSPRQMVSVATAMIPFLEHDDANRALMGANMQRQAVPLVRSEAPLVGTGMELRAAIDAGDVVVSEKAGVVEEVSADYITVMADDGTRHTYRMRKFARSNHGTCANQRPIVDAGQRVEAGQVVADGPCTQNGEMALGKNLLVAIMPWEGHNYEDAIILSNRLVEEDVLTSIHIEEHEIDARDTKLGAEEITRDIPNVSDEVLADLDERGIVRIGAEVRDGDILVGKVTPKGETELTPEERLLRAIFGEKAREVRDTSLKVPHGESGKVIGIRVFSREDDDELPAGVNELVRVYVAQKRKISDGDKLAGRHGNKGVIGKILPVEDMPFLPDGTPVDIILNTHGVPRRMNIGQILETHLGWVAKAGWNINVAGADGVPDWAEKLPEELYSAPSDSIVATPVFDGARENELSGLLASTLPNRDGDVMVNEDGKAELFDGRSGEPFPYPVTVGYMYILKLHHLVDDKIHARSTGPYSMITQQPLGGKAQFGGQRFGEMECWAMQAYGAAYTLQELLTIKSDDTVGRVKVYEAIVKGENIPEPGIPESFKVLLKELQSLCLNVEVLSSDGAAIEMRDGDDEDLERAAANLGINLSRNESASVEDLA.

This sequence belongs to the RNA polymerase beta chain family. As to quaternary structure, the RNAP catalytic core consists of 2 alpha, 1 beta, 1 beta' and 1 omega subunit. When a sigma factor is associated with the core the holoenzyme is formed, which can initiate transcription.

The catalysed reaction is RNA(n) + a ribonucleoside 5'-triphosphate = RNA(n+1) + diphosphate. In terms of biological role, DNA-dependent RNA polymerase catalyzes the transcription of DNA into RNA using the four ribonucleoside triphosphates as substrates. In Mycobacterium sp. (strain KMS), this protein is DNA-directed RNA polymerase subunit beta.